The following is a 211-amino-acid chain: Receptor expression-enhancing protein 6 (211 aa).

The next 2 membrane-spanning stretches (helical) occupy residues 44–64 (LSLY…IGFV) and 89–109 (WVVY…LSWF). A disordered region spans residues 190-211 (AGPSTPLEADLKPSQTPQPKDK). Positions 202 to 211 (PSQTPQPKDK) are enriched in polar residues.

Belongs to the DP1 family. As to quaternary structure, interacts with STX3. Interacts with clathrin. Expressed in circumvallate papillae and testis. Expressed in the retina. Isoform 1 is predominantly present in mature optic cups. Isoform 1 expression is confined to the cell body and inner segment of developing rod photoreceptor cells.

The protein resides in the endoplasmic reticulum membrane. The protein localises to the cytoplasmic vesicle. Its subcellular location is the clathrin-coated vesicle membrane. Functionally, required for correct function and survival of retinal photoreceptors. Required for retinal development. In rod photoreceptors, facilitates stability and/or trafficking of guanylate cyclases and is required to maintain endoplasmic reticulum and mitochondrial homeostasis. May play a role in clathrin-coated intracellular vesicle trafficking of proteins from the endoplasmic reticulum to the retinal rod plasma membrane. This chain is Receptor expression-enhancing protein 6 (REEP6), found in Homo sapiens (Human).